We begin with the raw amino-acid sequence, 410 residues long: Transcription factor rglT (410 aa).

A disordered region spans residues 1–24 (MQFDSLPLPPSSSHDTTSVPPLKR). Residues 28–55 (CDECRKRKLKCSGEATGCSRCLKQSLPC) constitute a DNA-binding region (zn(2)-C6 fungal-type). A disordered region spans residues 353–372 (HRTRTVESPNEPGSCSPVSH). Polar residues predominate over residues 358-369 (VESPNEPGSCSP).

It is found in the nucleus. In terms of biological role, transcription factor that is involved in protection against oxidative stress. Binds to promoter regions of the gliotoxin (GT) biosynthetic genes gliZ, gliF, gliT, gliM, gliA and gtmA. Two related but different DNA motifs (5'-TCGG-3' and 5'-CGGNCGG-3') are specifically enriched among rglT binding sites in GT-inducing conditions. Also indirectly regulates the expression of gliP, gliG, gliH and gliN. Plays a key role in resistance against exogenously-added GT and GT biosynthesis, mainly through the direct regulation of gliT. Furthermore, rglT is important for virulence in chemotherapeutic mice with invasive pulmonary aspergillosis (IPA). In Aspergillus fumigatus (strain CBS 144.89 / FGSC A1163 / CEA10) (Neosartorya fumigata), this protein is Transcription factor rglT.